A 163-amino-acid chain; its full sequence is Sperm acrosome membrane-associated protein 3 (163 aa).

Positions 1–35 (MEAGSWAPRRWPRPPGIVLLALASVLSSLLSSGQA) are cleaved as a signal peptide. The region spanning 36 to 163 (RVYSRCELAR…LSDWVDGCEL (128 aa)) is the C-type lysozyme domain. Cystine bridges form between cysteine 41–cysteine 161, cysteine 65–cysteine 149, cysteine 99–cysteine 114, and cysteine 110–cysteine 128.

The protein belongs to the glycosyl hydrolase 22 family. In terms of assembly, interacts with ASTL.

The protein resides in the secreted. Its function is as follows. Sperm surface membrane protein that may be involved in sperm-egg plasma membrane adhesion and fusion during fertilization. It could be a potential receptor for the egg oligosaccharide residue N-acetylglucosamine, which is present in the extracellular matrix over the egg plasma membrane. The processed form has no detectable bacteriolytic activity in vitro. In Bos taurus (Bovine), this protein is Sperm acrosome membrane-associated protein 3 (SPACA3).